A 221-amino-acid polypeptide reads, in one-letter code: Veficolin-1 (221 aa).

The signal sequence occupies residues 1-25 (MTAWLDFPLALSPLVVVSMKGGSFG). Residues 50-104 (QGQAGIPGIPGVPGTNGLPGAKGDLGPQGPPGERGSTGIPGKAGPKGDKGDQGEA) enclose the Collagen-like domain. Positions 54–104 (GIPGIPGVPGTNGLPGAKGDLGPQGPPGERGSTGIPGKAGPKGDKGDQGEA) are disordered. In terms of domain architecture, Fibrinogen C-terminal spans 111-221 (QQQEAGAKDC…DFNNSKTFAK (111 aa)). C120 and C148 are disulfide-bonded.

This sequence belongs to the ficolin lectin family. Veficolin subfamily. Expressed by the mandibular venom duct.

Its subcellular location is the secreted. Initiates complement activation and/or interferes in platelet aggregation and/or blood coagulation. The protein is Veficolin-1 of Varanus komodoensis (Komodo dragon).